A 188-amino-acid polypeptide reads, in one-letter code: Pyridoxal 5'-phosphate synthase subunit PdxT (188 aa).

47–49 (GES) contributes to the L-glutamine binding site. The active-site Nucleophile is the Cys79. L-glutamine contacts are provided by residues Arg105 and 134 to 135 (IR). Catalysis depends on charge relay system residues His170 and Glu172.

The protein belongs to the glutaminase PdxT/SNO family. In the presence of PdxS, forms a dodecamer of heterodimers. Only shows activity in the heterodimer.

It carries out the reaction aldehydo-D-ribose 5-phosphate + D-glyceraldehyde 3-phosphate + L-glutamine = pyridoxal 5'-phosphate + L-glutamate + phosphate + 3 H2O + H(+). It catalyses the reaction L-glutamine + H2O = L-glutamate + NH4(+). It functions in the pathway cofactor biosynthesis; pyridoxal 5'-phosphate biosynthesis. In terms of biological role, catalyzes the hydrolysis of glutamine to glutamate and ammonia as part of the biosynthesis of pyridoxal 5'-phosphate. The resulting ammonia molecule is channeled to the active site of PdxS. The polypeptide is Pyridoxal 5'-phosphate synthase subunit PdxT (Listeria innocua serovar 6a (strain ATCC BAA-680 / CLIP 11262)).